The chain runs to 494 residues: Rhamnulokinase (494 aa).

18 to 22 (ASSGR) is an ATP binding site. Residues G87 and 242–244 (HDT) each bind substrate. The Proton acceptor role is filled by D243. T265 provides a ligand contact to ATP. Residue N302 coordinates substrate. ATP is bound at residue Q310. The cysteines at positions 360 and 377 are disulfide-linked. G411 is an ATP binding site.

Belongs to the rhamnulokinase family. Requires Mg(2+) as cofactor.

It carries out the reaction L-rhamnulose + ATP = L-rhamnulose 1-phosphate + ADP + H(+). Its pathway is carbohydrate degradation; L-rhamnose degradation; glycerone phosphate from L-rhamnose: step 2/3. Its function is as follows. Involved in the catabolism of L-rhamnose (6-deoxy-L-mannose). Catalyzes the transfer of the gamma-phosphate group from ATP to the 1-hydroxyl group of L-rhamnulose to yield L-rhamnulose 1-phosphate. The protein is Rhamnulokinase of Enterococcus faecalis (strain ATCC 700802 / V583).